The chain runs to 664 residues: Macoilin-1 (664 aa).

The next 4 membrane-spanning stretches (helical) occupy residues 28–48 (TFLYLKFLVVWALVLLADFVL), 75–95 (AFSVFFVCVAFTSDIICLLFI), 120–140 (VCLPTVSLWILFVYIEAAIRF), and 154–174 (FAAHCIGYPVVTLGFGFKSYV). The tract at residues 206 to 225 (QMLQRQERETEEATSKGMSE) is disordered. A compositionally biased stretch (basic and acidic residues) spans 210 to 219 (RQERETEEAT). Asn-234, Asn-336, Asn-339, Asn-348, and Asn-655 each carry an N-linked (GlcNAc...) asparagine glycan. Disordered stretches follow at residues 315–364 (VGAG…LAPH) and 644–664 (FMDTSPSSLDPNASVYQPLKK). Residues 334–348 (SHNSTNGSVPSSSSN) show a composition bias toward low complexity. Residues 644 to 658 (FMDTSPSSLDPNASV) are compositionally biased toward polar residues.

The protein belongs to the macoilin family.

Its subcellular location is the nucleus membrane. The protein localises to the rough endoplasmic reticulum membrane. In terms of biological role, may play a role in the regulation of neuronal activity. This Danio rerio (Zebrafish) protein is Macoilin-1.